Consider the following 125-residue polypeptide: Phosphoribosyl-AMP cyclohydrolase (125 aa).

D74 contributes to the Mg(2+) binding site. C75 contributes to the Zn(2+) binding site. The Mg(2+) site is built by D76 and D78. Residues C92 and C99 each coordinate Zn(2+).

The protein belongs to the PRA-CH family. In terms of assembly, homodimer. Requires Mg(2+) as cofactor. Zn(2+) is required as a cofactor.

It is found in the cytoplasm. The enzyme catalyses 1-(5-phospho-beta-D-ribosyl)-5'-AMP + H2O = 1-(5-phospho-beta-D-ribosyl)-5-[(5-phospho-beta-D-ribosylamino)methylideneamino]imidazole-4-carboxamide. It participates in amino-acid biosynthesis; L-histidine biosynthesis; L-histidine from 5-phospho-alpha-D-ribose 1-diphosphate: step 3/9. In terms of biological role, catalyzes the hydrolysis of the adenine ring of phosphoribosyl-AMP. The sequence is that of Phosphoribosyl-AMP cyclohydrolase from Desulfatibacillum aliphaticivorans.